A 49-amino-acid chain; its full sequence is Venom peptide 3 (49 aa).

The signal sequence occupies residues 1-23 (MRFTFVLVIAATVAVLGFFGINA). AXPX repeat units lie at residues 23–26 (AEPM) and 31–34 (AEPY). Positions 24-37 (EPMPDPHAEPYPDA) are excised as a propeptide. A Leucine amide modification is found at leucine 48.

As to expression, expressed by the venom gland.

It is found in the secreted. This is Venom peptide 3 from Eumenes pomiformis (Potter wasp).